We begin with the raw amino-acid sequence, 331 residues long: MKQTVYIASPESQQIHVWNLNHEGALTLTQVVDVPGQVQPMVVSPDKRYLYVGVRPEFRVLAYRIAPDDGALTFAAESVLPGSPTHISTDHQGQFVFVGSYNAGNVSVTRLEDGLPVGVVDVVEGLDGCHSANISPDNRTLWVPALKQDRICLFTVSDDGHLVAQDPAEVTTVEGAGPRHMVFHPNEQYAYCVNELNSSVDVWELKDPHGNIECVQTLDMMPENFSDTRWAADIHITPDGRHLYACDRTASLITVFSVSEDGSVLSKEGFQPTETQPRGFNVDYSGKYLIAAGQKSHHISVYEIVGEQGLLHEKGRYAVGQGPMWVVVNAH.

Lys-287 bears the N6-acetyllysine mark.

Belongs to the cycloisomerase 2 family.

The catalysed reaction is 6-phospho-D-glucono-1,5-lactone + H2O = 6-phospho-D-gluconate + H(+). The protein operates within carbohydrate degradation; pentose phosphate pathway; D-ribulose 5-phosphate from D-glucose 6-phosphate (oxidative stage): step 2/3. In terms of biological role, catalyzes the hydrolysis of 6-phosphogluconolactone to 6-phosphogluconate. This Shigella flexneri protein is 6-phosphogluconolactonase.